A 197-amino-acid polypeptide reads, in one-letter code: Xanthine phosphoribosyltransferase (197 aa).

Residues Leu20 and Asn27 each contribute to the xanthine site. 128-132 (ANGQA) serves as a coordination point for 5-phospho-alpha-D-ribose 1-diphosphate. Residue Lys156 coordinates xanthine.

This sequence belongs to the purine/pyrimidine phosphoribosyltransferase family. Xpt subfamily. In terms of assembly, homodimer.

It is found in the cytoplasm. It catalyses the reaction XMP + diphosphate = xanthine + 5-phospho-alpha-D-ribose 1-diphosphate. It functions in the pathway purine metabolism; XMP biosynthesis via salvage pathway; XMP from xanthine: step 1/1. Converts the preformed base xanthine, a product of nucleic acid breakdown, to xanthosine 5'-monophosphate (XMP), so it can be reused for RNA or DNA synthesis. The sequence is that of Xanthine phosphoribosyltransferase from Bacillus cereus (strain B4264).